Here is a 133-residue protein sequence, read N- to C-terminus: Small ribosomal subunit protein uS11 (133 aa).

It belongs to the universal ribosomal protein uS11 family. Part of the 30S ribosomal subunit. Interacts with proteins S7 and S18. Binds to IF-3.

Functionally, located on the platform of the 30S subunit, it bridges several disparate RNA helices of the 16S rRNA. Forms part of the Shine-Dalgarno cleft in the 70S ribosome. The polypeptide is Small ribosomal subunit protein uS11 (Christiangramia forsetii (strain DSM 17595 / CGMCC 1.15422 / KT0803) (Gramella forsetii)).